We begin with the raw amino-acid sequence, 489 residues long: Dihydropyrimidinase 1 (489 aa).

Zn(2+) contacts are provided by His-61, His-63, and Lys-156. The residue at position 156 (Lys-156) is an N6-carboxylysine. Tyr-161 contacts substrate. Zn(2+) is bound by residues His-189 and His-245. Ser-295 serves as a coordination point for substrate. Asp-323 serves as a coordination point for Zn(2+). Asn-344 contacts substrate.

This sequence belongs to the metallo-dependent hydrolases superfamily. Hydantoinase/dihydropyrimidinase family. In terms of assembly, homotetramer. Zn(2+) is required as a cofactor. Post-translationally, carboxylation allows a single lysine to coordinate two zinc ions. As to expression, in L1-L2 larvae, expressed in body hypodermal cells, hemidesmosomes and in a neuronal cell between the pharynx and ring neuropil. In adults, expression is seen in body hypodermal cells and pharynx.

The protein resides in the nucleus. The catalysed reaction is 5,6-dihydrouracil + H2O = 3-(carbamoylamino)propanoate + H(+). This is Dihydropyrimidinase 1 (dhp-1) from Caenorhabditis elegans.